A 349-amino-acid polypeptide reads, in one-letter code: Hydroxymethylglutaryl-CoA synthase (349 aa).

(3S)-3-hydroxy-3-methylglutaryl-CoA contacts are provided by Asp30 and Ala31. The active-site Proton donor/acceptor is the Glu82. 2 residues coordinate (3S)-3-hydroxy-3-methylglutaryl-CoA: Cys114 and Thr155. Cys114 functions as the Acyl-thioester intermediate in the catalytic mechanism. CoA is bound at residue Arg203. Residues Thr205 and His238 each contribute to the (3S)-3-hydroxy-3-methylglutaryl-CoA site. Catalysis depends on His238, which acts as the Proton donor/acceptor. Lys243 lines the CoA pocket. Positions 270 and 300 each coordinate (3S)-3-hydroxy-3-methylglutaryl-CoA.

The protein belongs to the thiolase-like superfamily. Archaeal HMG-CoA synthase family. In terms of assembly, interacts with acetoacetyl-CoA thiolase that catalyzes the precedent step in the pathway and with a DUF35 protein. The acetoacetyl-CoA thiolase/HMG-CoA synthase complex channels the intermediate via a fused CoA-binding site, which allows for efficient coupling of the endergonic thiolase reaction with the exergonic HMGCS reaction.

The enzyme catalyses acetoacetyl-CoA + acetyl-CoA + H2O = (3S)-3-hydroxy-3-methylglutaryl-CoA + CoA + H(+). It participates in metabolic intermediate biosynthesis; (R)-mevalonate biosynthesis; (R)-mevalonate from acetyl-CoA: step 2/3. Catalyzes the condensation of acetyl-CoA with acetoacetyl-CoA to form 3-hydroxy-3-methylglutaryl-CoA (HMG-CoA). Functions in the mevalonate (MVA) pathway leading to isopentenyl diphosphate (IPP), a key precursor for the biosynthesis of isoprenoid compounds that are building blocks of archaeal membrane lipids. This chain is Hydroxymethylglutaryl-CoA synthase, found in Methanococcus maripaludis (strain C5 / ATCC BAA-1333).